A 997-amino-acid polypeptide reads, in one-letter code: Kinesin-like protein KIF19 (997 aa).

The region spanning 11 to 346 (QLTVALRIRP…LTYADRAKNI (336 aa)) is the Kinesin motor domain. An ATP-binding site is contributed by 104-111 (GPTGCGKT). Positions 360–437 (HIAQYTSIIS…REQMDIRRQL (78 aa)) form a coiled coil. Over residues 468-491 (RARKWRDEHRKETYGKDDSEKDSD) the composition is skewed to basic and acidic residues. The disordered stretch occupies residues 468–503 (RARKWRDEHRKETYGKDDSEKDSDTGDDQSDFIEPP). Positions 508–577 (ARETIQILEG…ELEIENTEMQ (70 aa)) form a coiled coil. 3 disordered regions span residues 662-690 (NLTA…RNPI), 792-811 (GDRL…SMSE), and 848-890 (GGGS…SRSF). 2 stretches are compositionally biased toward basic and acidic residues: residues 792–802 (GDRLQPMKERS) and 869–880 (QKLEKREESLEV). A coiled-coil region spans residues 861–889 (HRTQKKQAQKLEKREESLEVKRRKKRSRS).

Belongs to the TRAFAC class myosin-kinesin ATPase superfamily. Kinesin family.

It localises to the cytoplasm. Its subcellular location is the cytoskeleton. The protein resides in the cell projection. It is found in the cilium. Functionally, plus end-directed microtubule-dependent motor protein that regulates the length of motile cilia by mediating depolymerization of microtubules at ciliary tips. The polypeptide is Kinesin-like protein KIF19 (kif19) (Xenopus laevis (African clawed frog)).